We begin with the raw amino-acid sequence, 112 residues long: UPF0145 protein RB3016 (112 aa).

It belongs to the UPF0145 family.

The sequence is that of UPF0145 protein RB3016 from Rhodopirellula baltica (strain DSM 10527 / NCIMB 13988 / SH1).